The primary structure comprises 363 residues: Chorismate synthase (363 aa).

NADP(+) contacts are provided by arginine 48 and arginine 54. FMN contacts are provided by residues 125-127, 237-238, glycine 277, 292-296, and arginine 318; these read RSS, NA, and KPTSS.

Belongs to the chorismate synthase family. As to quaternary structure, homotetramer. Requires FMNH2 as cofactor.

It carries out the reaction 5-O-(1-carboxyvinyl)-3-phosphoshikimate = chorismate + phosphate. The protein operates within metabolic intermediate biosynthesis; chorismate biosynthesis; chorismate from D-erythrose 4-phosphate and phosphoenolpyruvate: step 7/7. Its function is as follows. Catalyzes the anti-1,4-elimination of the C-3 phosphate and the C-6 proR hydrogen from 5-enolpyruvylshikimate-3-phosphate (EPSP) to yield chorismate, which is the branch point compound that serves as the starting substrate for the three terminal pathways of aromatic amino acid biosynthesis. This reaction introduces a second double bond into the aromatic ring system. In Stutzerimonas stutzeri (strain A1501) (Pseudomonas stutzeri), this protein is Chorismate synthase.